The primary structure comprises 506 residues: Nostrin (506 aa).

An F-BAR domain is found at 1–260; the sequence is MRDPLTDCPY…AISKIDIEKD (260 aa). The residue at position 114 (Ser-114) is a Phosphoserine. The stretch at 160–222 forms a coiled coil; it reads SMTEKEKRKL…LELEKERIQL (63 aa). Residues 292–372 enclose the REM-1 domain; sequence AMDKERRKSL…SYKLSSMLAE (81 aa). Residues 438 to 497 enclose the SH3 domain; sequence LSSRLCKALYSFQARQDDELNLEKGDIVIIHEKKEGGWWFGSLNGKKGHFPAAYVEELPS. Ser-479 carries the phosphoserine modification.

Homotrimer. Interacts with DAB2. Interacts with NOS3, DNM2, WASL and CAV1. Interacts (via SH3 domain) with DNM2; this interaction allows the recruitment of NOS3 to dynamin-positive structures. As to expression, expressed at highest levels in heart, kidney, placenta and lung, and at lowest levels in brain, thymus and spleen. Present in vascular endothelial cells and placenta. Over-expressed in placenta from women with pre-eclampsia (at protein level).

It localises to the cell membrane. Its subcellular location is the cytoplasmic vesicle. The protein resides in the cytoplasm. The protein localises to the cytoskeleton. It is found in the nucleus. Its function is as follows. Multivalent adapter protein which may decrease NOS3 activity by inducing its translocation away from the plasma membrane. The polypeptide is Nostrin (Homo sapiens (Human)).